The sequence spans 300 residues: Ribosomal RNA small subunit methyltransferase H (300 aa).

Residues 46 to 48 (GGH), aspartate 65, phenylalanine 92, aspartate 107, and glutamine 114 each bind S-adenosyl-L-methionine.

It belongs to the methyltransferase superfamily. RsmH family.

The protein localises to the cytoplasm. It carries out the reaction cytidine(1402) in 16S rRNA + S-adenosyl-L-methionine = N(4)-methylcytidine(1402) in 16S rRNA + S-adenosyl-L-homocysteine + H(+). Specifically methylates the N4 position of cytidine in position 1402 (C1402) of 16S rRNA. In Prochlorococcus marinus subsp. pastoris (strain CCMP1986 / NIES-2087 / MED4), this protein is Ribosomal RNA small subunit methyltransferase H.